The following is a 79-amino-acid chain: Conotoxin TxMEKL-021 (79 aa).

Residues M1–A19 form the signal peptide. Positions L20 to R47 are excised as a propeptide. Intrachain disulfides connect C51–C65, C58–C69, and C64–C75.

It belongs to the conotoxin O2 superfamily. As to expression, expressed by the venom duct.

The protein localises to the secreted. This Conus textile (Cloth-of-gold cone) protein is Conotoxin TxMEKL-021.